Consider the following 84-residue polypeptide: Cell division topological specificity factor (84 aa).

This sequence belongs to the MinE family.

Its function is as follows. Prevents the cell division inhibition by proteins MinC and MinD at internal division sites while permitting inhibition at polar sites. This ensures cell division at the proper site by restricting the formation of a division septum at the midpoint of the long axis of the cell. The sequence is that of Cell division topological specificity factor from Pseudomonas putida (strain ATCC 700007 / DSM 6899 / JCM 31910 / BCRC 17059 / LMG 24140 / F1).